Here is a 223-residue protein sequence, read N- to C-terminus: Urease accessory protein UreF (223 aa).

The protein belongs to the UreF family. In terms of assembly, ureD, UreF and UreG form a complex that acts as a GTP-hydrolysis-dependent molecular chaperone, activating the urease apoprotein by helping to assemble the nickel containing metallocenter of UreC. The UreE protein probably delivers the nickel.

It is found in the cytoplasm. Its function is as follows. Required for maturation of urease via the functional incorporation of the urease nickel metallocenter. The polypeptide is Urease accessory protein UreF (Agrobacterium fabrum (strain C58 / ATCC 33970) (Agrobacterium tumefaciens (strain C58))).